The following is a 420-amino-acid chain: Proteasome-activating nucleotidase (420 aa).

Residues 1–25 (MRSHLVKPGSVYDGIEPGELGETTE) form a disordered region. Residues 22–79 (ETTESVQDRVRQLESRNSFLEEQCSQIESEKRYLENQKIKYEREIRKLQSELDRMKTS) are a coiled coil. Residues 203–208 (GTGKTL) and His342 contribute to the ATP site. Residues 418–420 (MFV) form a docks into pockets in the proteasome alpha-ring to cause gate opening region.

This sequence belongs to the AAA ATPase family. Homohexamer. The hexameric complex has a two-ring architecture resembling a top hat that caps the 20S proteasome core at one or both ends. Upon ATP-binding, the C-terminus of PAN interacts with the alpha-rings of the proteasome core by binding to the intersubunit pockets.

The protein localises to the cytoplasm. In terms of biological role, ATPase which is responsible for recognizing, binding, unfolding and translocation of substrate proteins into the archaeal 20S proteasome core particle. Is essential for opening the gate of the 20S proteasome via an interaction with its C-terminus, thereby allowing substrate entry and access to the site of proteolysis. Thus, the C-termini of the proteasomal ATPase function like a 'key in a lock' to induce gate opening and therefore regulate proteolysis. Unfolding activity requires energy from ATP hydrolysis, whereas ATP binding alone promotes ATPase-20S proteasome association which triggers gate opening, and supports translocation of unfolded substrates. The protein is Proteasome-activating nucleotidase of Methanosarcina mazei (strain ATCC BAA-159 / DSM 3647 / Goe1 / Go1 / JCM 11833 / OCM 88) (Methanosarcina frisia).